Here is a 229-residue protein sequence, read N- to C-terminus: DNA mismatch repair protein MutH (229 aa).

It belongs to the MutH family.

It localises to the cytoplasm. Its function is as follows. Sequence-specific endonuclease that cleaves unmethylated GATC sequences. It is involved in DNA mismatch repair. This Escherichia coli O45:K1 (strain S88 / ExPEC) protein is DNA mismatch repair protein MutH.